We begin with the raw amino-acid sequence, 280 residues long: Nucleotide-binding protein Dgeo_0723 (280 aa).

ATP is bound at residue 8–15; it reads GLSGSGKS. Position 57 to 60 (57 to 60) interacts with GTP; it reads DART.

The protein belongs to the RapZ-like family.

In terms of biological role, displays ATPase and GTPase activities. The chain is Nucleotide-binding protein Dgeo_0723 from Deinococcus geothermalis (strain DSM 11300 / CIP 105573 / AG-3a).